The sequence spans 644 residues: Chaperone protein DnaK (644 aa).

T199 carries the phosphothreonine; by autocatalysis modification. The interval 602 to 644 (IYAKKSSEGQTAQGQTQSQESTKPAEEGVVDAEFEEVKEEDKK) is disordered. Positions 609-623 (EGQTAQGQTQSQEST) are enriched in polar residues. Acidic residues predominate over residues 629–644 (GVVDAEFEEVKEEDKK).

The protein belongs to the heat shock protein 70 family.

Acts as a chaperone. The protein is Chaperone protein DnaK of Legionella pneumophila (strain Lens).